The chain runs to 128 residues: Lymphocyte antigen 6 complex locus protein G5c (128 aa).

The N-terminal stretch at 1–29 (MGAEYGCLPSTSQALYVILLIVLVRMSLV) is a signal peptide. A UPAR/Ly6 domain is found at 37-128 (LRCYRCLLET…NPQNRVFYIP (92 aa)). 5 disulfide bridges follow: Cys-39-Cys-66, Cys-42-Cys-51, Cys-58-Cys-85, Cys-94-Cys-111, and Cys-112-Cys-117. N-linked (GlcNAc...) asparagine glycosylation occurs at Asn-73.

As to quaternary structure, forms oligomers. Post-translationally, N-glycosylated. In terms of tissue distribution, abundantly expressed in the epididymis.

Its subcellular location is the secreted. Functionally, may have a role in hematopoietic cell differentiation. The polypeptide is Lymphocyte antigen 6 complex locus protein G5c (LY6G5C) (Canis lupus familiaris (Dog)).